Here is a 366-residue protein sequence, read N- to C-terminus: Cyclic amide hydrolase (366 aa).

An RU A region spans residues 1–103 (MKVGVHKLAM…TLFTRAPDDG (103 aa)). Substrate-binding positions include arginine 51 and 82–83 (SG). An RU B region spans residues 110–247 (RLALGIGITR…CEVLLFGNAP (138 aa)). Lysine 160 is an active-site residue. Substrate is bound by residues arginine 192, 230–231 (SA), arginine 327, and 346–347 (SG). Residue serine 230 is the Nucleophile of the active site. The segment at 253–366 (FRIGHGVLKD…AAPIAAIVRA (114 aa)) is RU C.

This sequence belongs to the cyclic amide hydrolase (CyAH) family. Homotetramer.

Its function is as follows. Cyclic amide hydrolase of unknown substrate specificity. Catalyzes the hydrolytic ring-opening of a cyclic amide. Does not act on cyanuric acid nor barbituric acid. The polypeptide is Cyclic amide hydrolase (Azorhizobium caulinodans (strain ATCC 43989 / DSM 5975 / JCM 20966 / LMG 6465 / NBRC 14845 / NCIMB 13405 / ORS 571)).